Consider the following 87-residue polypeptide: Translation initiation factor IF-1 2 (87 aa).

Residues 1–72 (MAADDHIEME…TKGRIARRTT (72 aa)) form the S1-like domain. A disordered region spans residues 65-87 (GRIARRTTTPSGGPRPARSGNRR).

The protein belongs to the IF-1 family. Component of the 30S ribosomal translation pre-initiation complex which assembles on the 30S ribosome in the order IF-2 and IF-3, IF-1 and N-formylmethionyl-tRNA(fMet); mRNA recruitment can occur at any time during PIC assembly.

Its subcellular location is the cytoplasm. Its function is as follows. One of the essential components for the initiation of protein synthesis. Stabilizes the binding of IF-2 and IF-3 on the 30S subunit to which N-formylmethionyl-tRNA(fMet) subsequently binds. Helps modulate mRNA selection, yielding the 30S pre-initiation complex (PIC). Upon addition of the 50S ribosomal subunit IF-1, IF-2 and IF-3 are released leaving the mature 70S translation initiation complex. This Nitratidesulfovibrio vulgaris (strain ATCC 29579 / DSM 644 / CCUG 34227 / NCIMB 8303 / VKM B-1760 / Hildenborough) (Desulfovibrio vulgaris) protein is Translation initiation factor IF-1 2.